The sequence spans 488 residues: Histone deacetylase 2 (488 aa).

A histone deacetylase region spans residues 9 to 322; sequence KKKVCYYYDG…WTYETAVALD (314 aa). The 1D-myo-inositol 1,4,5,6-tetrakisphosphate site is built by G28 and K32. K75 carries the N6-acetyllysine; alternate modification. K75 is covalently cross-linked (Glycyl lysine isopeptide (Lys-Gly) (interchain with G-Cter in SUMO2); alternate). Residue H142 is part of the active site. 8 residues coordinate Ca(2+): D175, D177, H179, F188, T191, V194, S198, and F199. Positions 177 and 179 each coordinate Zn(2+). The residue at position 221 (K221) is an N6-acetyllysine. Y223 serves as a coordination point for Ca(2+). C262 carries the S-nitrosocysteine modification. Position 265 (D265) interacts with Zn(2+). R271 serves as a coordination point for 1D-myo-inositol 1,4,5,6-tetrakisphosphate. C274 carries the S-nitrosocysteine modification. Residues 389–488 form a disordered region; the sequence is AVHEDSGDED…GAKSEQLSNP (100 aa). Phosphoserine is present on residues S394, S407, S422, and S424. Over residues 402–417 the composition is skewed to basic and acidic residues; the sequence is PDKRISIRASDKRIAC. A compositionally biased stretch (acidic residues) spans 418–428; that stretch reads DEEFSDSEDEG. The segment covering 429–481 has biased composition (basic and acidic residues); it reads EGGRRNVADHKKGAKKARIEEDKKETEDKKTDVKEEDKSKDNSGEKTDPKGAK. Residues K439, K452, K458, K462, K478, and K481 each participate in a glycyl lysine isopeptide (Lys-Gly) (interchain with G-Cter in SUMO2) cross-link.

The protein belongs to the histone deacetylase family. HD type 1 subfamily. Part of the core histone deacetylase (HDAC) complex composed of HDAC1, HDAC2, RBBP4 and RBBP7, the core complex associates with SIN3, SAP18 and SAP30 to form the SIN3 HDAC complex. Component of the nucleosome remodeling and deacetylase (NuRD) repressor complex, composed of core proteins MTA1, MTA2, MTA3, RBBP4, RBBP7, HDAC1, HDAC2, MBD2, MBD3, and peripherally associated proteins CDK2AP1, CDK2AP2, GATAD2A, GATAD2B, CHD3, CHD4 and CHD5. The exact stoichiometry of the NuRD complex is unknown, and some subunits such as MBD2 and MBD3, GATAD2A and GATAD2B, and CHD3, CHD4 and CHD5 define mutually exclusive NuRD complexes. Component of a RCOR/GFI/KDM1A/HDAC complex. Component of a BHC histone deacetylase complex that contains HDAC1, HDAC2, HMG20B, KDM1A, RCOR1 and PHF21A. The BHC complex may also contain ZMYM2, ZNF217, ZMYM3, GSE1 and GTF2I. Part of a complex containing the core histones H2A, H2B, H3 and H4, DEK and unphosphorylated DAXX. Part of a complex containing ATR and CHD4. Forms a heterologous complex at least with YY1. Interacts in the late S-phase of DNA-replication with DNMT1 in the other transcriptional repressor complex composed of DNMT1, DMAP1, PCNA, CAF1. Component of a mSin3A corepressor complex that contains SIN3A, SAP130, SUDS3, ARID4B, HDAC1 and HDAC2. Part of a complex composed of TRIM28, HDAC1, HDAC2 and EHMT2. Part of a complex containing at least CDYL, MIER1, MIER2, HDAC1 and HDAC2. Component of a histone deacetylase complex containing DNTTIP1, ZNF541, HDAC1 and HDAC2. Forms a complex comprising APPL1, RUVBL2, APPL2, CTNNB1 and HDAC1. Interacts directly with GFI1. Interacts directly with GFI1B. Interacts with APEX1; the interaction is not dependent on the acetylated status of APEX1. Interacts with ATR. Interacts with BCL6 (non-acetylated form). Interacts with BEND3. Interacts with CBFA2T3. Interacts with CDK2AP1. Interacts with CHD4. Interacts with CHD5. Interacts with CHFR. Interacts with CRY1. Interacts with DNMT1. Interacts with GATAD2A. Interacts with HCFC1. Interacts with HDAC7. Interacts with HDAC10. Interacts with INSM1. Interacts with KDM4A. Interacts with MACROH2A1 (via the non-histone region). Interacts with MBD3L2. Interacts with MTA1, with a preference for sumoylated MTA1. Interacts with NACC2. Interacts with NRIP1. Interacts with PELP1. Interacts with PIMREG. Interacts with PRDM6. Interacts with PWWP2B Interacts with SAP30. Interacts with SAP30L. Interacts with SETDB1. Interacts with SIX3. Interacts with SMARCAD1. Interacts with SNW1. Interacts with SPHK2. Interacts with SPEN/MINT. Interacts (CK2 phosphorylated form) with SP3. Interacts with SUV39H1. Interacts with TSHZ3 (via its N-terminus). Interacts with ZMYND8. Interacts with ZNF431. Interacts with ZNF263; recruited to the SIX3 promoter along with other proteins involved in chromatin modification and transcriptional corepression where it contributes to transcriptional repression. Identified in a complex with HDAC1, KCTD19, DNTTIP1 and ZNF541. Component of the SIN3B complex, which includes SIN3B, HDAC2, PHF12 and MORF4L1; interacts directly with all subunits. It depends on Zn(2+) as a cofactor. Ca(2+) serves as cofactor. S-nitrosylated by GAPDH. In neurons, S-nitrosylation at Cys-262 and Cys-274 does not affect enzyme activity, but induces HDAC2 release from chromatin. This in turn increases acetylation of histones surrounding neurotrophin-dependent gene promoters and promotes their transcription. In embryonic cortical neurons, S-Nitrosylation regulates dendritic growth and branching.

It is found in the nucleus. It localises to the cytoplasm. The enzyme catalyses N(6)-acetyl-L-lysyl-[histone] + H2O = L-lysyl-[histone] + acetate. The catalysed reaction is N(6)-acetyl-L-lysyl-[protein] + H2O = L-lysyl-[protein] + acetate. It catalyses the reaction N(6)-(2E)-butenoyl-L-lysyl-[protein] + H2O = (2E)-2-butenoate + L-lysyl-[protein]. It carries out the reaction N(6)-(2-hydroxyisobutanoyl)-L-lysyl-[protein] + H2O = 2-hydroxy-2-methylpropanoate + L-lysyl-[protein]. The enzyme catalyses N(6)-[(S)-lactoyl]-L-lysyl-[protein] + H2O = (S)-lactate + L-lysyl-[protein]. With respect to regulation, inositol tetraphosphate (1D-myo-inositol 1,4,5,6-tetrakisphosphate) may act as an intermolecular glue between HDAC2 and N-Cor repressor complex components. In terms of biological role, histone deacetylase that catalyzes the deacetylation of lysine residues on the N-terminal part of the core histones (H2A, H2B, H3 and H4). Histone deacetylation gives a tag for epigenetic repression and plays an important role in transcriptional regulation, cell cycle progression and developmental events. Histone deacetylases act via the formation of large multiprotein complexes. Forms transcriptional repressor complexes by associating with MAD, SIN3, YY1 and N-COR. Component of a RCOR/GFI/KDM1A/HDAC complex that suppresses, via histone deacetylase (HDAC) recruitment, a number of genes implicated in multilineage blood cell development. Acts as a component of the histone deacetylase NuRD complex which participates in the remodeling of chromatin. Component of the SIN3B complex that represses transcription and counteracts the histone acetyltransferase activity of EP300 through the recognition H3K27ac marks by PHF12 and the activity of the histone deacetylase HDAC2. Also deacetylates non-histone targets: deacetylates TSHZ3, thereby regulating its transcriptional repressor activity. May be involved in the transcriptional repression of circadian target genes, such as PER1, mediated by CRY1 through histone deacetylation. Involved in MTA1-mediated transcriptional corepression of TFF1 and CDKN1A. In addition to protein deacetylase activity, also acts as a protein-lysine deacylase by recognizing other acyl groups: catalyzes removal of (2E)-butenoyl (crotonyl), lactoyl (lactyl) and 2-hydroxyisobutanoyl (2-hydroxyisobutyryl) acyl groups from lysine residues, leading to protein decrotonylation, delactylation and de-2-hydroxyisobutyrylation, respectively. This Mus musculus (Mouse) protein is Histone deacetylase 2.